The chain runs to 300 residues: MSYRELVAELPREHAEALSDALVELGALSVSVEDADADTPDEQPLFGEPGLVPERTAWQHSRVIALVDAAQDPAVLLAAAANEAGLAETPRFELREVEEQDWVRLTQSQFDPIHIGEKIWVVPSWHDAPEPDALVLELDPGLAFGTGSHPTTRLCMEWLEQTVQPGQTVLDYGCGSGILAILAKKCGAGNVTGIDIDPQAVEAARQNSERNRADVTYGLPDDCPAGEFDIVVANILSNPLKLMASMLTSKVKPGGRIALSGVLARQADEVASVYARYVDIAVWREHEGWVCLAGTRRESH.

S-adenosyl-L-methionine contacts are provided by Thr-152, Gly-173, Asp-195, and Asn-234.

Belongs to the methyltransferase superfamily. PrmA family.

It localises to the cytoplasm. It carries out the reaction L-lysyl-[protein] + 3 S-adenosyl-L-methionine = N(6),N(6),N(6)-trimethyl-L-lysyl-[protein] + 3 S-adenosyl-L-homocysteine + 3 H(+). Methylates ribosomal protein L11. This Burkholderia thailandensis (strain ATCC 700388 / DSM 13276 / CCUG 48851 / CIP 106301 / E264) protein is Ribosomal protein L11 methyltransferase.